The sequence spans 329 residues: Oligopeptide transport ATP-binding protein AppF (329 aa).

Positions 10-261 (LELRDVKKYF…PLHPYTQALL (252 aa)) constitute an ABC transporter domain. Position 53-60 (53-60 (GESGCGKS)) interacts with ATP.

Belongs to the ABC transporter superfamily.

The protein localises to the cell membrane. This protein is a component of an oligopeptide permease, a binding protein-dependent transport system. This APP system can completely substitute for the OPP system in both sporulation and genetic competence, though, unlike OPP, is incapable of transporting tripeptides. Probably responsible for energy coupling to the transport system. The polypeptide is Oligopeptide transport ATP-binding protein AppF (appF) (Bacillus subtilis (strain 168)).